The following is a 262-amino-acid chain: Hydroxyethylthiazole kinase (262 aa).

Met50 serves as a coordination point for substrate. 2 residues coordinate ATP: Arg125 and Thr171. Gly198 contributes to the substrate binding site.

It belongs to the Thz kinase family. The cofactor is Mg(2+).

The catalysed reaction is 5-(2-hydroxyethyl)-4-methylthiazole + ATP = 4-methyl-5-(2-phosphooxyethyl)-thiazole + ADP + H(+). Its pathway is cofactor biosynthesis; thiamine diphosphate biosynthesis; 4-methyl-5-(2-phosphoethyl)-thiazole from 5-(2-hydroxyethyl)-4-methylthiazole: step 1/1. Its function is as follows. Catalyzes the phosphorylation of the hydroxyl group of 4-methyl-5-beta-hydroxyethylthiazole (THZ). The sequence is that of Hydroxyethylthiazole kinase from Escherichia coli O139:H28 (strain E24377A / ETEC).